The following is a 110-amino-acid chain: uncharacterized protein (110 aa).

Positions 1–16 (MSVKLKYDKIDQRNGD) are enriched in basic and acidic residues. Disordered regions lie at residues 1–29 (MSVK…GNGN) and 73–100 (IKQQ…ESPN). Over residues 20–29 (GNHNNCGNGN) the composition is skewed to low complexity.

This is an uncharacterized protein from Dictyostelium discoideum (Social amoeba).